A 191-amino-acid chain; its full sequence is Superoxide dismutase [Mn/Fe] (191 aa).

Fe(3+) contacts are provided by His-27, His-74, Asp-157, and His-161. The Mn(2+) site is built by His-27, His-74, Asp-157, and His-161.

This sequence belongs to the iron/manganese superoxide dismutase family. In terms of assembly, homodimer. Mn(2+) is required as a cofactor. Fe(3+) serves as cofactor.

It catalyses the reaction 2 superoxide + 2 H(+) = H2O2 + O2. With respect to regulation, inhibited by hydrogen peroxide. Functionally, destroys superoxide anion radicals which are normally produced within the cells and which are toxic to biological systems. Catalyzes the dismutation of superoxide anion radicals into O2 and H2O2 by successive reduction and oxidation of the transition metal ion at the active site. This chain is Superoxide dismutase [Mn/Fe] (sodB), found in Porphyromonas gingivalis (strain ATCC BAA-308 / W83).